A 707-amino-acid chain; its full sequence is Molybdenum cofactor sulfurase (707 aa).

An N6-(pyridoxal phosphate)lysine modification is found at Lys206. The active site involves Cys365. One can recognise an MOSC domain in the interval 558-705; sequence QWLENALDMT…VEAGSAVRFF (148 aa).

The protein belongs to the class-V pyridoxal-phosphate-dependent aminotransferase family. MOCOS subfamily. The cofactor is pyridoxal 5'-phosphate.

It carries out the reaction Mo-molybdopterin + L-cysteine + AH2 = thio-Mo-molybdopterin + L-alanine + A + H2O. It participates in cofactor biosynthesis; molybdopterin biosynthesis. Sulfurates the molybdenum cofactor. Sulfation of molybdenum is essential for xanthine dehydrogenase (XDH) and aldehyde oxidase (ADO) enzymes in which molybdenum cofactor is liganded by 1 oxygen and 1 sulfur atom in active form. The polypeptide is Molybdenum cofactor sulfurase (mocs-1) (Caenorhabditis briggsae).